A 778-amino-acid polypeptide reads, in one-letter code: Ribonucleoside-diphosphate reductase large subunit (778 aa).

Substrate is bound by residues serine 177, 192-193 (SC), glycine 221, 419-423 (NLCIE), and 613-617 (PTATS). An intrachain disulfide couples cysteine 193 to cysteine 439. Residue asparagine 419 is the Proton acceptor of the active site. Cysteine 421 acts as the Cysteine radical intermediate in catalysis. The Proton acceptor role is filled by glutamate 423.

It belongs to the ribonucleoside diphosphate reductase large chain family. As to quaternary structure, heterotetramer composed of a homodimer of the large subunit (R1) and a homodimer of the small subunit (R2). Larger multisubunit protein complex are also active, composed of (R1)n(R2)n.

The catalysed reaction is a 2'-deoxyribonucleoside 5'-diphosphate + [thioredoxin]-disulfide + H2O = a ribonucleoside 5'-diphosphate + [thioredoxin]-dithiol. Its activity is regulated as follows. Under complex allosteric control mediated by deoxynucleoside triphosphates and ATP binding. The type of nucleotide bound at the specificity site determines substrate preference. It seems probable that ATP makes the enzyme reduce CDP and UDP, dGTP favors ADP reduction and dTTP favors GDP reduction. Functionally, ribonucleoside-diphosphate reductase holoenzyme provides the precursors necessary for viral DNA synthesis. Allows virus growth in non-dividing cells. Catalyzes the biosynthesis of deoxyribonucleotides from the corresponding ribonucleotides. The chain is Ribonucleoside-diphosphate reductase large subunit from African swine fever virus (isolate Tick/South Africa/Pretoriuskop Pr4/1996) (ASFV).